Consider the following 1041-residue polypeptide: Importin-9 (1041 aa).

Position 2 is an N-acetylalanine (alanine 2). Positions 43-119 (AEEQIKVLEV…RELLPNGLRE (77 aa)) constitute an Importin N-terminal domain. The segment at 936-967 (QATPAEWNQDDSNDMWEDQEEEEEEEEDGLAG) is disordered. The span at 943 to 964 (NQDDSNDMWEDQEEEEEEEEDG) shows a compositional bias: acidic residues.

It belongs to the importin beta family. Interacts with histones H2A, H2B, H3 and H4. The binding is coupled to RanGTP cycles. Interacts with AKIRIN2; promoting association with pre-assembled proteasomes. Associates with pre-assembled proteasomes; interaction is indirect and mediated via interaction with AKIRIN2. Interacts with PPP2R1A and PPP2R1B.

The protein localises to the cytoplasm. It is found in the nucleus. In terms of biological role, nuclear transport receptor that mediates nuclear import of proteins, such as histones, proteasome and actin. Serves as receptor for nuclear localization signals (NLS) in cargo substrates. Is thought to mediate docking of the importin/substrate complex to the nuclear pore complex (NPC) through binding to nucleoporin and the complex is subsequently translocated through the pore by an energy requiring, Ran-dependent mechanism. At the nucleoplasmic side of the NPC, Ran binds to the importin, the importin/substrate complex dissociates and importin is re-exported from the nucleus to the cytoplasm where GTP hydrolysis releases Ran. The directionality of nuclear import is thought to be conferred by an asymmetric distribution of the GTP- and GDP-bound forms of Ran between the cytoplasm and nucleus. Mediates the import of pre-assembled proteasomes into the nucleus; AKIRIN2 acts as a molecular bridge between IPO9 and the proteasome complex. Mediates the nuclear import of histones H2A, H2B, H4 and H4. In addition to nuclear import, also acts as a chaperone for histones by preventing inappropriate non-nucleosomal interactions. Mediates the nuclear import of actin. The protein is Importin-9 of Mus musculus (Mouse).